The following is a 1019-amino-acid chain: Clotting factor C (1019 aa).

The N-terminal stretch at 1-25 is a signal peptide; the sequence is MVLASFLVSGLVLGILAQQMRPVQS. The region spanning 102-137 is the EGF-like domain; sequence YGTWCSGECQCKNGGICDQRTGACTCRDRYEGAHCE. 16 disulfides stabilise this stretch: C110–C118, C112–C125, C127–C136, C142–C182, C168–C195, C199–C241, C227–C254, C260–C308, C294–C321, C331–C350, C354–C374, C464–C564, C538–C556, C576–C621, C607–C634, and C720–C748. 3 consecutive Sushi domains span residues 140–197, 198–256, and 258–323; these read KGCP…KCIR, ECAK…QCKK, and VFCP…SCVK. An LCCL domain is found at 325–421; that stretch reads ADREVDCDSK…EELKSLARSF (97 aa). One can recognise a C-type lectin domain in the interval 436–568; sequence CPDGWFEVEE…PSSFACMMDL (133 aa). N-linked (GlcNAc...) asparagine glycosylation is found at N523 and N534. 2 Sushi domains span residues 574 to 636 and 689 to 750; these read AKCD…RCIK and PRSS…SCIP. N-linked (GlcNAc...) asparagine glycosylation is found at N624, N740, and N767. One can recognise a Peptidase S1 domain in the interval 763–1019; it reads IWNGNSTEIG…VFLSWIRQFI (257 aa). C794 and C810 are oxidised to a cystine. Residues H809 and D865 each act as charge relay system in the active site. Residue N912 is glycosylated (N-linked (GlcNAc...) asparagine). Residues C932 and C951 are joined by a disulfide bond. Substrate is bound at residue D960. Residues C962 and C996 are joined by a disulfide bond. S966 serves as the catalytic Charge relay system.

The protein belongs to the peptidase S1 family. Heterodimer of a light chain and a heavy chain linked by a disulfide bond. Forms a covalent heterodimer with intracellular coagulation inhibitor 1/LICI-1. Forms a covalent heterodimer with intracellular coagulation inhibitor 2/LICI-2. N-glycosylated. In terms of processing, lipopolysaccharide (LPS) activates clotting factor C by inducing the proteolytic cleavage of the clotting factor C light chain into clotting factor C chains A and B. Clotting factor C chains heavy, A and B remain associated via interchain disulfide bonds. Expressed in hemocytes (at protein level).

Its subcellular location is the secreted. It catalyses the reaction Selective cleavage of 103-Arg-|-Ser-104 and 124-Ile-|-Ile-125 bonds in Limulus clotting factor B to form activated factor B. Cleavage of -Pro-Arg-|-Xaa- bonds in synthetic substrates.. Its activity is regulated as follows. Activated by Gram-negative bacterial lipopolysaccharides. Inhibited by intracellular coagulation inhibitor 1/LICI-1 and to a lesser extent by intracellular coagulation inhibitors 2/LICI-2 and 3/LICI-3. Inhibited by the small molecule diisopropyl fluorophosphate (DFP). In terms of biological role, this enzyme is closely associated with an endotoxin-sensitive hemolymph coagulation system which may play important roles in both hemostasis and host defense mechanisms. Its active form catalyzes the activation of clotting factor B. This Tachypleus tridentatus (Japanese horseshoe crab) protein is Clotting factor C.